Reading from the N-terminus, the 101-residue chain is Small ribosomal subunit protein uS14 (101 aa).

Residues 1–25 form a disordered region; the sequence is MAKVSAIQKNKSRQKKSQRLHNKRS. The span at 10–25 shows a compositional bias: basic residues; it reads NKSRQKKSQRLHNKRS.

This sequence belongs to the universal ribosomal protein uS14 family. In terms of assembly, part of the 30S ribosomal subunit. Contacts proteins S3 and S10.

Binds 16S rRNA, required for the assembly of 30S particles and may also be responsible for determining the conformation of the 16S rRNA at the A site. In Rickettsia typhi (strain ATCC VR-144 / Wilmington), this protein is Small ribosomal subunit protein uS14.